Consider the following 180-residue polypeptide: MKGTSEVKPMETHRKLLKPLVEKRRRERINNSLEKLRIFLSQTLKSEKLKNPKVEKAEILECTVQFLQSRKLLPLDREAVDKEYQSGFQHCLETTLHFMNSKPDMNGVTKELLSHQMSSCKPPSDAWSPTCAPLTKHVPSLSYQDSTPHLVSNSISISPTKTLVDSHFTYQTFKTWRPWV.

The bHLH domain occupies 13–70 (HRKLLKPLVEKRRRERINNSLEKLRIFLSQTLKSEKLKNPKVEKAEILECTVQFLQSR). The Orange domain maps to 84 to 116 (YQSGFQHCLETTLHFMNSKPDMNGVTKELLSHQ). Residues 176–179 (WRPW) carry the WRPW motif motif.

In terms of assembly, transcription repression requires formation of a complex with a corepressor protein of the Groucho/TLE family. Expressed in the presumptive midbrain-hindbrain boundary (MHB) as early as the early gastrula stage (stage 10.5). Expression in the MHB continues through to tailbud stage. Also transiently expressed in the eye anlage at late neurula stage.

It is found in the nucleus. In terms of biological role, transcriptional repressor. Represses transcription from both N box- and E box-containing promoters. Demarcates the prospective midbrain-hindbrain boundary (MHB) region in the neuroectoderm in early gastrulae embryos by repressing transcription of a number of target genes. The sequence is that of Transcription factor HES-7.1-B (hes7.1-b) from Xenopus laevis (African clawed frog).